The sequence spans 287 residues: Large ribosomal subunit protein uL2 (287 aa).

2 disordered regions span residues 25–57 (TKTE…RGGG) and 203–287 (LSAG…GRES). Basic residues-rich tracts occupy residues 209 to 220 (GRNRWKGRRPKV) and 259 to 287 (TRNR…GRES).

It belongs to the universal ribosomal protein uL2 family. As to quaternary structure, part of the 50S ribosomal subunit. Forms a bridge to the 30S subunit in the 70S ribosome.

In terms of biological role, one of the primary rRNA binding proteins. Required for association of the 30S and 50S subunits to form the 70S ribosome, for tRNA binding and peptide bond formation. It has been suggested to have peptidyltransferase activity; this is somewhat controversial. Makes several contacts with the 16S rRNA in the 70S ribosome. The sequence is that of Large ribosomal subunit protein uL2 from Nostoc punctiforme (strain ATCC 29133 / PCC 73102).